The following is a 307-amino-acid chain: Glycine--tRNA ligase alpha subunit (307 aa).

Belongs to the class-II aminoacyl-tRNA synthetase family. As to quaternary structure, tetramer of two alpha and two beta subunits.

Its subcellular location is the cytoplasm. It catalyses the reaction tRNA(Gly) + glycine + ATP = glycyl-tRNA(Gly) + AMP + diphosphate. In Aeromonas salmonicida (strain A449), this protein is Glycine--tRNA ligase alpha subunit.